Here is a 634-residue protein sequence, read N- to C-terminus: Chaperone protein HtpG (634 aa).

The interval 1 to 339 is a; substrate-binding; that stretch reads MAQETMSFQA…SADLPLNVSR (339 aa). Residues 340–559 form a b region; sequence EILQESRDVK…DGEMSGYLQR (220 aa). A c region spans residues 560 to 634; it reads MLKAAGQQAP…ALLLARANEA (75 aa).

It belongs to the heat shock protein 90 family. In terms of assembly, homodimer.

Its subcellular location is the cytoplasm. In terms of biological role, molecular chaperone. Has ATPase activity. This chain is Chaperone protein HtpG, found in Paraburkholderia xenovorans (strain LB400).